The following is a 227-amino-acid chain: 7-cyano-7-deazaguanine synthase (227 aa).

8 to 18 (VSGGADSATVL) contributes to the ATP binding site. Residues C192, C202, C205, and C208 each coordinate Zn(2+).

The protein belongs to the QueC family. It depends on Zn(2+) as a cofactor.

It carries out the reaction 7-carboxy-7-deazaguanine + NH4(+) + ATP = 7-cyano-7-deazaguanine + ADP + phosphate + H2O + H(+). It functions in the pathway purine metabolism; 7-cyano-7-deazaguanine biosynthesis. Its function is as follows. Catalyzes the ATP-dependent conversion of 7-carboxy-7-deazaguanine (CDG) to 7-cyano-7-deazaguanine (preQ(0)). In Rickettsia canadensis (strain McKiel), this protein is 7-cyano-7-deazaguanine synthase.